We begin with the raw amino-acid sequence, 883 residues long: DNA double-strand break repair Rad50 ATPase (883 aa).

ATP contacts are provided by residues arginine 12, 32–38 (NGSGKSS), and glutamine 134. Positions 218–420 (ELRGELGGLE…EIGSRRGELK (203 aa)) form a coiled coil. A Zinc-hook domain is found at 395–492 (IQKARERKEE…ELVEVEKTLK (98 aa)). Zn(2+) contacts are provided by cysteine 440 and cysteine 443. Coiled coils occupy residues 452-585 (RKEL…KKLG) and 620-741 (EDLL…LLKE). 790–795 (FLSGGE) is a binding site for ATP.

This sequence belongs to the SMC family. RAD50 subfamily. Homodimer. Forms a heterotetramer composed of two Mre11 subunits and two Rad50 subunits. Zn(2+) is required as a cofactor.

In terms of biological role, part of the Rad50/Mre11 complex, which is involved in the early steps of DNA double-strand break (DSB) repair. The complex may facilitate opening of the processed DNA ends to aid in the recruitment of HerA and NurA. Rad50 controls the balance between DNA end bridging and DNA resection via ATP-dependent structural rearrangements of the Rad50/Mre11 complex. The sequence is that of DNA double-strand break repair Rad50 ATPase from Thermococcus kodakarensis (strain ATCC BAA-918 / JCM 12380 / KOD1) (Pyrococcus kodakaraensis (strain KOD1)).